Here is a 338-residue protein sequence, read N- to C-terminus: MAAGCSEAPRPAAASDGSLVGQAGVLPCLELPTYAAACALVNSRYSCLVAGPHQRHIALSPRYLNRKRTGIREQLDAELLRYSESLLGVPIAYDNIKVVGELGDIYDDQGHIHLNIEADFVIFCPEPGQKLMGIVNKVSSSHIGCLVHGCFNASIPKPEQLSAEQWQTMEINMGDELEFEVFRLDSDAAGVFCIRGKLNITSLQFKRSEVSEEVTENGTEEAAKKPKKKKKKKDPETYEVDSGTTKLADDADDTPMEESALQNTNNANGIWEEEPKKKKKKKKHQEVQDQDPVFQGSDSSGYQSDHKKKKKKRKHSEEAEFTPPLKCSPKRKGKSNFL.

Residues 209 to 338 are disordered; it reads EVSEEVTENG…PKRKGKSNFL (130 aa). 3 positions are modified to phosphoserine: Ser242, Ser304, and Ser316. Thr322 is modified (phosphothreonine). Ser328 carries the post-translational modification Phosphoserine. Positions 328–338 are enriched in basic residues; the sequence is SPKRKGKSNFL.

Belongs to the eukaryotic RPA43 RNA polymerase subunit family. Component of the RNA polymerase I (Pol I) complex consisting of 13 subunits: a ten-subunit catalytic core composed of POLR1A/RPA1, POLR1B/RPA2, POLR1C/RPAC1, POLR1D/RPAC2, POLR1H/RPA12, POLR2E/RPABC1, POLR2F/RPABC2, POLR2H/RPABC3, POLR2K/RPABC4 and POLR2L/RPABC5; a mobile stalk subunit POLR1F/RPA43 protruding from the core and additional subunits homologous to general transcription factors POLR1E/RPA49 and POLR1G/RPA34. Interacts with RRN3/TIF-IA. In terms of tissue distribution, widely expressed. Expressed in all fetal and adult tissues tested, with highest expression in fetal lung, liver, and kidney, and low expression in all adult tissues.

It localises to the nucleus. The protein localises to the nucleolus. Component of RNA polymerase I (Pol I), a DNA-dependent RNA polymerase which synthesizes ribosomal RNA precursors using the four ribonucleoside triphosphates as substrates. Through its association with RRN3/TIF-IA may be involved in recruitment of Pol I to rDNA promoters. This chain is DNA-directed RNA polymerase I subunit RPA43, found in Homo sapiens (Human).